A 498-amino-acid chain; its full sequence is Aminotransferase swnA (498 aa).

Belongs to the class-I pyridoxal-phosphate-dependent aminotransferase family. It depends on pyridoxal 5'-phosphate as a cofactor.

It participates in mycotoxin biosynthesis. Aminotransferase; part of the gene cluster that mediates the biosynthesis of swainsonine (SW), a cytotoxic fungal alkaloid and a potential cancer therapy drug. Swainsonine production occurs via a multibranched pathway and is dispensable for fungal colonization of plants and infection of insect hosts. The first step of swainsonine biosynthesis is the production of the precursor pipecolic acid (PA) via conversion of L-lysine (Lys) to 1-piperideine-6-carboxylate (P6C) by the aminotransferase swnA, the latter being further reduced to PA by the reductase swnR. PA can be converted from lysine by both the SW biosynthetic cluster and the unclustered genes such as lysine cyclodeaminase. The PKS-NRPS hybrid synthetase swnK uptakes and condensates PA and malonyl-CoA with and without skipping of the ketoreductase (KR) domain in order to produce 3 intermediates, 1-oxoindolizidine, (1S)-1-hydroxyindolizin, and (1R)-1-hydroxyindolizine; with the transisomer (1S)-1-hydroxyindolizin being predominant. The terminal thioester reductase (TE) domain of swnK is involved in reduction of the thioester bond to release the intermediate aldehydes. The oxidoreductase swnN could contribute to the reduction of 1-oxoindolizidine to (1S)-1-hydroxyindolizin and (1R)-1-hydroxyindolizine, contributing to the major route of SW production. The dioxygenase swnH2 would be responsible for the oxidization of (1R)-1-hydroxyindolizine into (1R,2S)-1,2-dihydroxyindolizine and of (1S)-1-hydroxyindolizin to yield both (1R,2S)-1,2-dihydroxyindolizine and (1S,2S)-1,2-dihydroxyindolizine. The dioxygenase swnH1 then performs the conversion of the 1,2-dihydroxyindolizine epimers to SW. This chain is Aminotransferase swnA, found in Metarhizium robertsii (strain ARSEF 23 / ATCC MYA-3075) (Metarhizium anisopliae (strain ARSEF 23)).